The sequence spans 193 residues: ATP-dependent Clp protease proteolytic subunit 1 (193 aa).

Serine 98 (nucleophile) is an active-site residue. The active site involves histidine 123.

This sequence belongs to the peptidase S14 family. As to quaternary structure, fourteen ClpP subunits assemble into 2 heptameric rings which stack back to back to give a disk-like structure with a central cavity, resembling the structure of eukaryotic proteasomes.

It is found in the cytoplasm. The enzyme catalyses Hydrolysis of proteins to small peptides in the presence of ATP and magnesium. alpha-casein is the usual test substrate. In the absence of ATP, only oligopeptides shorter than five residues are hydrolyzed (such as succinyl-Leu-Tyr-|-NHMec, and Leu-Tyr-Leu-|-Tyr-Trp, in which cleavage of the -Tyr-|-Leu- and -Tyr-|-Trp bonds also occurs).. Functionally, cleaves peptides in various proteins in a process that requires ATP hydrolysis. Has a chymotrypsin-like activity. Plays a major role in the degradation of misfolded proteins. The sequence is that of ATP-dependent Clp protease proteolytic subunit 1 from Bacillus anthracis.